The sequence spans 955 residues: MTRKNTTTNPWAKFHGPNLGYVIEQYDLYVTGAGSVDPELQELFEIFGAPSFQDDVVTGDNTATHFSPQNTGNIEKILKVVQLVEQIRSFGHTLAHINPMEDAANGQSLLEKAMNELSDADLKAIPAKTVWQDAPEGIHTALDVIHRLKEVYTQTLAYEFSHIQDSEERAWLHQMVESNSLRQPLSNKKRTALLKRLTAVEGFEQFLHKTFVGQKRFSIEGVDMLVPVLDEIVLEGAKNGVEDVMIGMAHRGRLSVLAHVLEKPYSHMFAEFKHAKIEGAVANSGWTGDVKYHLGREQVVSNEEVSTRVTLANNPSHLEFVNPVVEGFARAAQENRKKSGLPEQDTSKSFVILVHGDAAFPGQGIVSETLNLSRLNAYQTGGTIHVIANNAVGFTTDSYDSRSTKYSSDLAKGFDIPIVHVNADDPEACLAAANLAIQYRMLFKKDFLIDLIGYRRYGHNEMDDPAVTQPQVYKKIKNHPTVRAIYADQLQAAGVLNADEIETITQFIQEQLKSDYAQVPPADTSDATIHVKVPDVVAKGIQPIDTGVELDSLRAINEGLLSWPEGFNVYPKVKKILERRKDALEENGKIEWALAESLAFASILQEGTPIRLTGQDSQRGTFAHRHIVLHDTDTNETYSPLHRLPNINASFSVHNSPLSEAAVVGYEYGYNVFAPETLVMWEAQYGDFSNTAQALFDQYVSAGRAKWGQKSGLVLLLPHGYEGQGPEHSSARPERFLQLAAENNWTVANLTSAAQYFHILRRQASVLGTEAVRPLVLMTPKSLLRHPLTLSTASQLSEGRFQPALEQENLGTKPNKVKRLVLSTGKMAIDLAAEIESGKHEYNLDEIHIVRIEQLYPFPAEKVQSIIKRFKNLEEIIWVQEEPRNMGAWHYMAPILFELAGDKVKTGYIGRPDRSSPSGGDPFAHKAEQELIVAHALDVKYNFRQDKLEIEVFSN.

Belongs to the alpha-ketoglutarate dehydrogenase family. As to quaternary structure, homodimer. Part of the 2-oxoglutarate dehydrogenase (OGDH) complex composed of E1 (2-oxoglutarate dehydrogenase), E2 (dihydrolipoamide succinyltransferase) and E3 (dihydrolipoamide dehydrogenase); the complex contains multiple copies of the three enzymatic components (E1, E2 and E3). Requires thiamine diphosphate as cofactor.

It catalyses the reaction N(6)-[(R)-lipoyl]-L-lysyl-[protein] + 2-oxoglutarate + H(+) = N(6)-[(R)-S(8)-succinyldihydrolipoyl]-L-lysyl-[protein] + CO2. In terms of biological role, E1 component of the 2-oxoglutarate dehydrogenase (OGDH) complex which catalyzes the decarboxylation of 2-oxoglutarate, the first step in the conversion of 2-oxoglutarate to succinyl-CoA and CO(2). This Bacillus cereus (strain ATCC 10987 / NRS 248) protein is 2-oxoglutarate dehydrogenase E1 component.